The sequence spans 269 residues: ATP synthase subunit delta (269 aa).

It belongs to the ATPase delta chain family. F-type ATPases have 2 components, F(1) - the catalytic core - and F(0) - the membrane proton channel. F(1) has five subunits: alpha(3), beta(3), gamma(1), delta(1), epsilon(1). F(0) has three main subunits: a(1), b(2) and c(10-14). The alpha and beta chains form an alternating ring which encloses part of the gamma chain. F(1) is attached to F(0) by a central stalk formed by the gamma and epsilon chains, while a peripheral stalk is formed by the delta and b chains.

It localises to the cell membrane. F(1)F(0) ATP synthase produces ATP from ADP in the presence of a proton or sodium gradient. F-type ATPases consist of two structural domains, F(1) containing the extramembraneous catalytic core and F(0) containing the membrane proton channel, linked together by a central stalk and a peripheral stalk. During catalysis, ATP synthesis in the catalytic domain of F(1) is coupled via a rotary mechanism of the central stalk subunits to proton translocation. In terms of biological role, this protein is part of the stalk that links CF(0) to CF(1). It either transmits conformational changes from CF(0) to CF(1) or is implicated in proton conduction. This Nocardia farcinica (strain IFM 10152) protein is ATP synthase subunit delta.